Reading from the N-terminus, the 204-residue chain is Ribonuclease HII (204 aa).

Positions 1–197 (MILGIDEAGR…KNRILNPKLL (197 aa)) constitute an RNase H type-2 domain. Residues D6, E7, and D103 each coordinate a divalent metal cation.

It belongs to the RNase HII family. Mn(2+) serves as cofactor. The cofactor is Mg(2+).

Its subcellular location is the cytoplasm. The catalysed reaction is Endonucleolytic cleavage to 5'-phosphomonoester.. Functionally, endonuclease that specifically degrades the RNA of RNA-DNA hybrids. The sequence is that of Ribonuclease HII from Helicobacter pylori (strain G27).